Here is a 715-residue protein sequence, read N- to C-terminus: Polyribonucleotide nucleotidyltransferase (715 aa).

2 residues coordinate Mg(2+): Asp-493 and Asp-499. Positions 560 to 619 constitute a KH domain; the sequence is PRMITIKINPEKIRDVIGKGGSVIRALTEETGTTIDISDDGVVTIASTSSEGMAEAKKRI. The S1 motif domain maps to 629–697; that stretch reads GQVYEGTVLK…EKGRVRLSAK (69 aa).

Belongs to the polyribonucleotide nucleotidyltransferase family. Requires Mg(2+) as cofactor.

It is found in the cytoplasm. The enzyme catalyses RNA(n+1) + phosphate = RNA(n) + a ribonucleoside 5'-diphosphate. In terms of biological role, involved in mRNA degradation. Catalyzes the phosphorolysis of single-stranded polyribonucleotides processively in the 3'- to 5'-direction. The chain is Polyribonucleotide nucleotidyltransferase from Burkholderia multivorans (strain ATCC 17616 / 249).